Consider the following 359-residue polypeptide: Protein mab-21-like 2-A (359 aa).

Belongs to the mab-21 family.

It localises to the nucleus. Its subcellular location is the cytoplasm. In terms of biological role, required for normal development of the eye. May promote dorsalization of the developing embryo by antagonizing the ventralizing factor bmp4. Functional antagonism of bmp4 may require interaction with smad1. Required for gastrulation and subsequent neural development. May function as a transcriptional repressor. The chain is Protein mab-21-like 2-A (mab21l2-a) from Xenopus laevis (African clawed frog).